Reading from the N-terminus, the 285-residue chain is MGQLGVGRTGKTAVLDIELRRSGSRTIISRQYSEVPLQVQRALYPDAGLPGMAHVYVLSPSGGLLQGDRYKTSISLKDKAAAHVTTQGASRIYGMNSNCAIHKMDISAGKGCYLEYIPDQVIPYAKSRYFQEVRLAIDDDAAAVYSEVVTPGRVAMGESFLYDILCTSVRCENQDGSLRFAENARAEPRRMNLRGEAVLGGYSVHGTVYVMAPPESARTIEYTAGRIISHTDGILGGTSLLPGGAGITARLLSHRTDSIFKCIEGIAGACRMEMTGAAYPGIRKC.

This sequence belongs to the UreD family. In terms of assembly, ureD, UreF and UreG form a complex that acts as a GTP-hydrolysis-dependent molecular chaperone, activating the urease apoprotein by helping to assemble the nickel containing metallocenter of UreC. The UreE protein probably delivers the nickel.

It is found in the cytoplasm. Required for maturation of urease via the functional incorporation of the urease nickel metallocenter. The chain is Urease accessory protein UreD from Cenarchaeum symbiosum (strain A).